The chain runs to 328 residues: Stress response kinase A (328 aa).

Asp201 acts as the Proton acceptor in catalysis. 2 residues coordinate Mg(2+): Asn206 and Asp217. Asp217 is an active-site residue.

The protein belongs to the SrkA/RdoA protein kinase family. Monomer. Requires Mg(2+) as cofactor.

The protein localises to the cytoplasm. The catalysed reaction is L-seryl-[protein] + ATP = O-phospho-L-seryl-[protein] + ADP + H(+). The enzyme catalyses L-threonyl-[protein] + ATP = O-phospho-L-threonyl-[protein] + ADP + H(+). Functionally, a protein kinase that phosphorylates Ser and Thr residues. Probably acts to suppress the effects of stress linked to accumulation of reactive oxygen species. Probably involved in the extracytoplasmic stress response. The protein is Stress response kinase A of Escherichia coli O157:H7.